Reading from the N-terminus, the 56-residue chain is Potassium channel toxin alpha-KTx 9.1 (56 aa).

An N-terminal signal peptide occupies residues 1 to 28 (MSRLFTLVLIVLAMNVMMAIISDPVVEA). Intrachain disulfides connect cysteine 31/cysteine 47, cysteine 34/cysteine 52, and cysteine 38/cysteine 54.

As to expression, expressed by the venom gland.

Its subcellular location is the secreted. Functionally, blocks small conductance calcium-activated potassium channels (KCNN, SK). Weakly inhibits the Kv7.1/KCNQ1 channel (10 uM of the toxin inhibits currents by 23.3%). Low toxicity by intracerebroventricular injection into mice. In Olivierus martensii (Manchurian scorpion), this protein is Potassium channel toxin alpha-KTx 9.1.